The sequence spans 319 residues: Guanidinobutyrase (319 aa).

Mn(2+) is bound by residues His129, Asp152, His154, Asp156, Asp243, and Asp245.

Belongs to the arginase family. Agmatinase subfamily. In terms of assembly, homohexamer. It depends on Mn(2+) as a cofactor.

The catalysed reaction is 4-guanidinobutanoate + H2O = urea + 4-aminobutanoate. Catalyzes specifically the hydrolysis of 4-guanidinobutanoate to 4-aminobutanoate and urea. Has no activity against arginine, agmatine, 3-guanidinopropionate and guanidinoacetate. This is Guanidinobutyrase (gbuA) from Pseudomonas aeruginosa (strain ATCC 15692 / DSM 22644 / CIP 104116 / JCM 14847 / LMG 12228 / 1C / PRS 101 / PAO1).